A 98-amino-acid polypeptide reads, in one-letter code: Lipolysis-activating peptide 1-beta chain (98 aa).

Residues 1–22 (MANVQVIFVAYIAVIAFSMVYG) form the signal peptide. The LCN-type CS-alpha/beta domain occupies 23 to 91 (DDYKPFGEHN…FLKAMEKQCP (69 aa)). 3 cysteine pairs are disulfide-bonded: Cys-37–Cys-60, Cys-45–Cys-70, and Cys-49–Cys-72.

This sequence belongs to the long (3 C-C) scorpion toxin superfamily. Homodimer; disulfide-linked or monomer (edited version) or heterodimer of an alpha chain (AC B8XH01) and this beta chain (non-edited version). Expressed by the venom gland.

The protein localises to the secreted. The homodimer inhibits HMG-CoA reductase (HMGCR) (32% of inhibition produced by 0.6 uM), a glycoprotein involved in the control of cholesterol biosynthesis. The inhibitory effects of bumarsin are seen at much lower concentrations (0.6 uM) than that for statins such as atorvastatin (5 mM) and simvastatin (10 uM). In addition to inhibition of HMG-CoA reductase, this protein lowers cholesterol levels by inducing steroid hormone synthesis via StAR, and by increasing reverse cholesterol transport mediated by the induction of ABCA1 and APOA1. In terms of biological role, the heterodimer non-edited LVP1 induces lipolysis in rat adipocytes. Induction of lipolysis by LVP1 appears to be mediated through the beta-2 adrenergic receptor pathway (ADRB2). Its function is as follows. The monomer edited version, similar to alpha-toxins, may modulate voltage-gated sodium channels (Nav) and may block voltage-gated potassium channels (Kv). This Buthus israelis (Israeli scorpion) protein is Lipolysis-activating peptide 1-beta chain.